Here is a 413-residue protein sequence, read N- to C-terminus: Glucose-1-phosphate adenylyltransferase (413 aa).

Residues Gly-169, 184-185 (EK), and Ser-201 each bind alpha-D-glucose 1-phosphate.

This sequence belongs to the bacterial/plant glucose-1-phosphate adenylyltransferase family. As to quaternary structure, homotetramer.

It catalyses the reaction alpha-D-glucose 1-phosphate + ATP + H(+) = ADP-alpha-D-glucose + diphosphate. The protein operates within glycan biosynthesis; glycogen biosynthesis. Functionally, involved in the biosynthesis of ADP-glucose, a building block required for the elongation reactions to produce glycogen. Catalyzes the reaction between ATP and alpha-D-glucose 1-phosphate (G1P) to produce pyrophosphate and ADP-Glc. The sequence is that of Glucose-1-phosphate adenylyltransferase from Trichlorobacter lovleyi (strain ATCC BAA-1151 / DSM 17278 / SZ) (Geobacter lovleyi).